Here is a 353-residue protein sequence, read N- to C-terminus: Ferredoxin--NADP reductase (353 aa).

FAD-binding residues include Thr25, Glu44, Gln52, Tyr57, Val97, Phe132, Asp298, and Ser339.

Belongs to the ferredoxin--NADP reductase type 2 family. As to quaternary structure, homodimer. FAD serves as cofactor.

The catalysed reaction is 2 reduced [2Fe-2S]-[ferredoxin] + NADP(+) + H(+) = 2 oxidized [2Fe-2S]-[ferredoxin] + NADPH. This is Ferredoxin--NADP reductase from Chlorobium chlorochromatii (strain CaD3).